A 988-amino-acid polypeptide reads, in one-letter code: Protein SEMI-ROLLED LEAF 2 (988 aa).

Residues 844 to 865 (SVDGGLHESPITNTGSSISKTT) form a disordered region. Residues 853 to 865 (PITNTGSSISKTT) are compositionally biased toward polar residues.

In terms of tissue distribution, expressed in root tips, and in the vascular bundles of leaf blades, leaf sheaths, and roots, especially in their sclerenchymatous cells.

Its subcellular location is the nucleus. It localises to the cytoplasm. Functions in regulating leaf rolling through abaxial side leaf cell differentiation. May be involved in the transdifferentiation process from mesophyll cells to sclerenchymatous cells. In Oryza sativa subsp. japonica (Rice), this protein is Protein SEMI-ROLLED LEAF 2.